The following is a 458-amino-acid chain: Protein adenylyltransferase FICD (458 aa).

Residues 1 to 23 (MILMPMASVVAVAEPKWVSVWGR) lie on the Cytoplasmic side of the membrane. Residues 24–44 (FLWMTLLSMALGSLLALLLPL) traverse the membrane as a helical; Signal-anchor for type II membrane protein segment. The Lumenal segment spans residues 45–458 (GAVEEQCLAV…GFKETLPVRP (414 aa)). An O-AMP-serine; by autocatalysis modification is found at Ser-79. Residue Thr-80 is modified to O-AMP-threonine; by autocatalysis. TPR repeat units follow at residues 106 to 139 (AKAA…DPGF) and 140 to 173 (VDAL…SPFH). Thr-183 is modified (O-AMP-threonine; by autocatalysis). The Inhibitory (S/T)XXXE(G/N) motif signature appears at 230-235 (TVAIEG). ATP is bound at residue Glu-234. N-linked (GlcNAc...) asparagine glycosylation occurs at Asn-275. The Fido domain maps to 285–420 (VTIDHMLEIH…VRPFIRFIAK (136 aa)). 316–319 (VGHH) provides a ligand contact to ATP. His-363 is a catalytic residue. ATP is bound by residues 367–374 (DGNGRTSR), 399–400 (YY), and Asn-407.

The protein belongs to the fic family. In terms of assembly, homodimer. Interacts with HD. It depends on Mg(2+) as a cofactor. The cofactor is Mn(2+). Post-translationally, auto-AMPylated in vitro.

Its subcellular location is the endoplasmic reticulum membrane. The enzyme catalyses L-tyrosyl-[protein] + ATP = O-(5'-adenylyl)-L-tyrosyl-[protein] + diphosphate. The catalysed reaction is 3-O-(5'-adenylyl)-L-threonyl-[protein] + H2O = L-threonyl-[protein] + AMP + H(+). It carries out the reaction L-threonyl-[protein] + ATP = 3-O-(5'-adenylyl)-L-threonyl-[protein] + diphosphate. With respect to regulation, the side chain of Glu-234 determines which of the two opposing activities (AMPylase or de-AMPylase) will take place. In response to endoplasmic reticulum stress, mediates de-AMPylase activity. Adenylyltransferase activity is inhibited by the inhibitory helix present at the N-terminus: Glu-234 binds ATP and competes with ATP-binding at Arg-374, thereby preventing adenylyltransferase activity. In unstressed cells, disengagement of Glu-234 promotes adenylyltransferase activity. Activation dissociates ATP-binding from Glu-234, allowing ordered binding of the entire ATP moiety with the alpha-phosphate in an orientation that is productive for accepting an incoming target hydroxyl side chain. Protein that can both mediate the addition of adenosine 5'-monophosphate (AMP) to specific residues of target proteins (AMPylation), and the removal of the same modification from target proteins (de-AMPylation), depending on the context. The side chain of Glu-231 determines which of the two opposing activities (AMPylase or de-AMPylase) will take place. Acts as a key regulator of the ERN1/IRE1-mediated unfolded protein response (UPR) by mediating AMPylation or de-AMPylation of HSPA5/BiP. In unstressed cells, acts as an adenylyltransferase by mediating AMPylation of HSPA5/BiP at 'Thr-518', thereby inactivating it. In response to endoplasmic reticulum stress, acts as a phosphodiesterase by mediating removal of ATP (de-AMPylation) from HSPA5/BiP at 'Thr-518', leading to restore HSPA5/BiP activity. Although it is able to AMPylate RhoA, Rac and Cdc42 Rho GTPases in vitro, Rho GTPases do not constitute physiological substrates. In Rattus norvegicus (Rat), this protein is Protein adenylyltransferase FICD.